The chain runs to 396 residues: Penicillopepsin-1 (396 aa).

A signal peptide spans 1-20; the sequence is MVVFSKVTASLACFSAVVSA. Residues 21 to 72 constitute a propeptide, activation peptide; that stretch reads AAVPVKSPRQGFSVNQVQKTVTGTRTVNLPGVYANALAKYGATVPANVHAAA. The 306-residue stretch at 88–393 folds into the Peptidase A1 domain; it reads YLTPVKIGES…DAEGPRLGFA (306 aa). Residues aspartate 104 and aspartate 285 contribute to the active site. Asparagine 311 is a glycosylation site (N-linked (GlcNAc...) asparagine). The cysteines at positions 321 and 356 are disulfide-linked.

This sequence belongs to the peptidase A1 family. In terms of assembly, monomer.

The protein localises to the secreted. The enzyme catalyses Hydrolysis of proteins with broad specificity similar to that of pepsin A, preferring hydrophobic residues at P1 and P1', but also cleaving 20-Gly-|-Glu-21 in the B chain of insulin. Clots milk, and activates trypsinogen.. Functionally, secreted aspartic endopeptidase that allows assimilation of proteinaceous substrates. The scissile peptide bond is attacked by a nucleophilic water molecule activated by two aspartic residues in the active site. Shows a broad primary substrate specificity. Favors hydrophobic residues at the P1 and P1' positions, but can also activate trypsinogen and hydrolyze the B chain of insulin between positions 'Gly-20' and 'Glu-21'. The protein is Penicillopepsin-1 (pepA) of Penicillium rubens (strain ATCC 28089 / DSM 1075 / NRRL 1951 / Wisconsin 54-1255) (Penicillium chrysogenum).